The primary structure comprises 391 residues: Matrix metalloproteinase-23 (391 aa).

The Cytoplasmic segment spans residues M1–R18. Positions M1 to R79 are excised as a propeptide. Residues W19–L39 form a helical membrane-spanning segment. The Lumenal portion of the chain corresponds to G40–N391. Residues N93 and N149 are each glycosylated (N-linked (GlcNAc...) asparagine). H212 lines the Zn(2+) pocket. E213 is a catalytic residue. Zn(2+)-binding residues include H216 and H222. A glycan (N-linked (GlcNAc...) asparagine) is linked at N233. The ShKT domain maps to C256–C290. Cystine bridges form between C256–C290, C263–C283, and C272–C287. Residues V298–Y383 form the Ig-like C2-type domain. N-linked (GlcNAc...) asparagine glycosylation occurs at N317. Cysteines 322 and 371 form a disulfide.

It belongs to the peptidase M10A family. Zn(2+) is required as a cofactor. N-glycosylated. In terms of processing, proteolytic cleavage might yield an active form. Expressed at relatively high level in heart, lung and spleen. Not detected in brain, liver, skeletal muscle, kidney and testis.

It is found in the endoplasmic reticulum membrane. The protein resides in the membrane. With respect to regulation, inhibited by TIMP2. Functionally, protease. May regulate the surface expression of some potassium channels by retaining them in the endoplasmic reticulum. This Mus musculus (Mouse) protein is Matrix metalloproteinase-23 (Mmp23).